We begin with the raw amino-acid sequence, 150 residues long: uncharacterized protein (150 aa).

An N-terminal signal peptide occupies residues 1-39; the sequence is MKQRFSQVATVIFFVMSIRSPRNLGFFFTLALFVVLVCS.

This is an uncharacterized protein from Saccharomyces cerevisiae (strain ATCC 204508 / S288c) (Baker's yeast).